The chain runs to 98 residues: uncharacterized protein (98 aa).

This is an uncharacterized protein from Homo sapiens (Human).